Consider the following 317-residue polypeptide: Transaldolase 1 (317 aa).

Lysine 132 serves as the catalytic Schiff-base intermediate with substrate.

The protein belongs to the transaldolase family. Type 1 subfamily. As to quaternary structure, homodimer.

Its subcellular location is the cytoplasm. It carries out the reaction D-sedoheptulose 7-phosphate + D-glyceraldehyde 3-phosphate = D-erythrose 4-phosphate + beta-D-fructose 6-phosphate. It functions in the pathway carbohydrate degradation; pentose phosphate pathway; D-glyceraldehyde 3-phosphate and beta-D-fructose 6-phosphate from D-ribose 5-phosphate and D-xylulose 5-phosphate (non-oxidative stage): step 2/3. Functionally, transaldolase is important for the balance of metabolites in the pentose-phosphate pathway. This is Transaldolase 1 from Shigella sonnei (strain Ss046).